A 121-amino-acid polypeptide reads, in one-letter code: Large ribosomal subunit protein uL14 (121 aa).

This sequence belongs to the universal ribosomal protein uL14 family. Part of the 50S ribosomal subunit. Forms a cluster with proteins L3 and L19. In the 70S ribosome, L14 and L19 interact and together make contacts with the 16S rRNA in bridges B5 and B8.

Its function is as follows. Binds to 23S rRNA. Forms part of two intersubunit bridges in the 70S ribosome. This chain is Large ribosomal subunit protein uL14, found in Prochlorococcus marinus (strain MIT 9211).